Consider the following 102-residue polypeptide: NADH-quinone oxidoreductase subunit K 2 (102 aa).

3 consecutive transmembrane segments (helical) span residues 6 to 26 (LEAF…GIIA), 30 to 50 (LVTV…ALVG), and 66 to 86 (FIIA…IAIF).

Belongs to the complex I subunit 4L family. NDH-1 is composed of 14 different subunits. Subunits NuoA, H, J, K, L, M, N constitute the membrane sector of the complex.

It localises to the cell inner membrane. The enzyme catalyses a quinone + NADH + 5 H(+)(in) = a quinol + NAD(+) + 4 H(+)(out). Its function is as follows. NDH-1 shuttles electrons from NADH, via FMN and iron-sulfur (Fe-S) centers, to quinones in the respiratory chain. The immediate electron acceptor for the enzyme in this species is believed to be ubiquinone. Couples the redox reaction to proton translocation (for every two electrons transferred, four hydrogen ions are translocated across the cytoplasmic membrane), and thus conserves the redox energy in a proton gradient. This is NADH-quinone oxidoreductase subunit K 2 from Aquifex aeolicus (strain VF5).